The chain runs to 333 residues: Gap junction alpha-4 protein (333 aa).

Residues 1-20 (MGDWGFLEKLLDQVQEHSTV) are Cytoplasmic-facing. A helical membrane pass occupies residues 21–40 (VGKIWLTVLFIFRILILGLA). At 41 to 76 (GESVWGDEQSDFECNTAQPGCTNVCYDQAFPISHIR) the chain is on the extracellular side. Residues 77 to 99 (YWVLQFLFVSTPTLVYLGHVIYL) form a helical membrane-spanning segment. Over 100–148 (SRREERLRQKEGELRALPAKDPQVERALAAVERQMAKISVAEDGRLRIR) the chain is Cytoplasmic. The helical transmembrane segment at 149-165 (GALMGTYVASVLCKSVL) threads the bilayer. Residues 166–207 (EAGFLYGQWRLYGWTMEPVFVCQRAPCPYLVDCFVSRPTEKT) lie on the Extracellular side of the membrane. Residues 208–230 (IFIIFMLVVGLISLVLNLLELVH) traverse the membrane as a helical segment. The Cytoplasmic segment spans residues 231–333 (LLCRCLSRGM…SSSASKKQYV (103 aa)). A disordered region spans residues 292-333 (ANLTTEERLASSRPPLFLDPPPQNGQKPPSRPSSSASKKQYV). Residues 323-333 (PSSSASKKQYV) are compositionally biased toward low complexity.

Belongs to the connexin family. Alpha-type (group II) subfamily. In terms of assembly, a connexon is composed of a hexamer of connexins. As to expression, expressed in multiple organs and tissues, including heart, uterus, ovary, and blood vessel endothelium.

The protein resides in the cell membrane. The protein localises to the cell junction. It localises to the gap junction. In terms of biological role, one gap junction consists of a cluster of closely packed pairs of transmembrane channels, the connexons, through which materials of low MW diffuse from one cell to a neighboring cell. The polypeptide is Gap junction alpha-4 protein (GJA4) (Homo sapiens (Human)).